The primary structure comprises 101 residues: Small ribosomal subunit protein uS14 (101 aa).

The protein belongs to the universal ribosomal protein uS14 family. Part of the 30S ribosomal subunit. Contacts proteins S3 and S10.

Its function is as follows. Binds 16S rRNA, required for the assembly of 30S particles and may also be responsible for determining the conformation of the 16S rRNA at the A site. In Blochmanniella floridana, this protein is Small ribosomal subunit protein uS14.